A 477-amino-acid chain; its full sequence is Argininosuccinate lyase (477 aa).

Positions 1-18 are enriched in polar residues; sequence MTTSSHSSEQPTSTQTSG. Positions 1–21 are disordered; that stretch reads MTTSSHSSEQPTSTQTSGMWG.

This sequence belongs to the lyase 1 family. Argininosuccinate lyase subfamily.

It localises to the cytoplasm. It carries out the reaction 2-(N(omega)-L-arginino)succinate = fumarate + L-arginine. Its pathway is amino-acid biosynthesis; L-arginine biosynthesis; L-arginine from L-ornithine and carbamoyl phosphate: step 3/3. The sequence is that of Argininosuccinate lyase from Acinetobacter baylyi (strain ATCC 33305 / BD413 / ADP1).